The primary structure comprises 597 residues: Leukocyte immunoglobulin-like receptor subfamily B member 2 (597 aa).

Positions 1–21 are cleaved as a signal peptide; it reads MTPIVTVLICLGLSLGPRTRV. The Extracellular segment spans residues 22-460; it reads QTGTIPKPTL…QSGLGRHLGV (439 aa). 4 Ig-like C2-type domains span residues 27–110, 111–229, 230–318, and 330–419; these read PKPT…SELS, DPLV…SLSV, QPGP…ILIT, and QPGP…LVVS. 4 disulfides stabilise this stretch: C49-C98, C144-C196, C156-C166, and C245-C296. Residues N280, N301, and N340 are each glycosylated (N-linked (GlcNAc...) asparagine). The cysteines at positions 345 and 396 are disulfide-linked. The interval 417–451 is disordered; sequence VVSGPSMGSSPPPTGPISTPGPEDQPLTPTGSDPQ. The helical transmembrane segment at 461–481 threads the bilayer; the sequence is VIGILVAVVLLLLLLLLLFLI. Residues 482 to 597 are Cytoplasmic-facing; the sequence is LRHRRQGKHW…PSIYATLAIH (116 aa). The interval 491 to 523 is disordered; it reads WTSTQRKADFQHPAGAVGPEPTDRGLQWRSSPA. 3 consecutive short sequence motifs (ITIM motif) follow at residues 530 to 535, 559 to 564, and 589 to 594; these read NLYAAV, VTYAQL, and SIYATL. The segment at 537-597 is disordered; it reads DTQPEDGVEM…PSIYATLAIH (61 aa).

As to quaternary structure, binds PTPN6 when phosphorylated. Binds FCGR1A. Interacts with peptide-bound HLA-G-B2M; this interaction is direct. Interacts with peptide-bound HLA-F-B2M; this interaction is direct. Post-translationally, phosphorylated on tyrosine residues. Dephosphorylated by PTPN6. As to expression, expressed in monocytes and at lower levels in myeloid and plasmacytoid dendritic cells. Expressed in tolerogenic IL10-producing dendritic cells. Expressed in myeloid-derived suppressor cells during pregnancy. Detected at low levels in natural killer (NK) cells. Expressed in B cells.

It localises to the cell membrane. Functionally, receptor for class I MHC antigens. Recognizes a broad spectrum of HLA-A, HLA-B, HLA-C, HLA-G and HLA-F alleles. Involved in the down-regulation of the immune response and the development of tolerance. Recognizes HLA-G in complex with B2M/beta-2 microglobulin and a nonamer self-peptide (peptide-bound HLA-G-B2M) triggering differentiation of type 1 regulatory T cells and myeloid-derived suppressor cells, both of which actively maintain maternal-fetal tolerance. Competes with CD8A for binding to class I MHC antigens. Inhibits FCGR1A-mediated phosphorylation of cellular proteins and mobilization of intracellular calcium ions. The protein is Leukocyte immunoglobulin-like receptor subfamily B member 2 of Homo sapiens (Human).